Consider the following 196-residue polypeptide: Superoxide dismutase [Fe] (196 aa).

Fe cation-binding residues include His20, His68, Asp157, and His161.

It belongs to the iron/manganese superoxide dismutase family. Homotetramer. The cofactor is Fe cation.

The enzyme catalyses 2 superoxide + 2 H(+) = H2O2 + O2. In terms of biological role, destroys superoxide anion radicals which are normally produced within the cells and which are toxic to biological systems. The polypeptide is Superoxide dismutase [Fe] (Tetrahymena pyriformis).